Reading from the N-terminus, the 442-residue chain is tRNA-2-methylthio-N(6)-dimethylallyladenosine synthase (442 aa).

An MTTase N-terminal domain is found at 3–120 (KKLYIETHGC…LPEMIDAARV (118 aa)). [4Fe-4S] cluster-binding residues include cysteine 12, cysteine 49, cysteine 83, cysteine 157, cysteine 161, and cysteine 164. Residues 143–375 (RVDGPSAYVS…QHRLNQQGFE (233 aa)) enclose the Radical SAM core domain. Residues 378–442 (RQMVGSIQRI…PHSLRGSLLQ (65 aa)) form the TRAM domain.

It belongs to the methylthiotransferase family. MiaB subfamily. In terms of assembly, monomer. Requires [4Fe-4S] cluster as cofactor.

Its subcellular location is the cytoplasm. It carries out the reaction N(6)-dimethylallyladenosine(37) in tRNA + (sulfur carrier)-SH + AH2 + 2 S-adenosyl-L-methionine = 2-methylsulfanyl-N(6)-dimethylallyladenosine(37) in tRNA + (sulfur carrier)-H + 5'-deoxyadenosine + L-methionine + A + S-adenosyl-L-homocysteine + 2 H(+). In terms of biological role, catalyzes the methylthiolation of N6-(dimethylallyl)adenosine (i(6)A), leading to the formation of 2-methylthio-N6-(dimethylallyl)adenosine (ms(2)i(6)A) at position 37 in tRNAs that read codons beginning with uridine. In Pseudomonas syringae pv. syringae (strain B728a), this protein is tRNA-2-methylthio-N(6)-dimethylallyladenosine synthase.